Consider the following 363-residue polypeptide: Mitogen-activated protein kinase 13 (363 aa).

Residues 33–319 (IPPIEPIGRG…VDEALKQPYL (287 aa)) form the Protein kinase domain. Residues 39 to 47 (IGRGAYGIV) and lysine 62 contribute to the ATP site. Aspartate 159 (proton acceptor) is an active-site residue. Residue threonine 191 is modified to Phosphothreonine. A TXY motif is present at residues 191–193 (TEY). Tyrosine 193 carries the post-translational modification Phosphotyrosine. The residue at position 196 (threonine 196) is a Phosphothreonine.

It belongs to the protein kinase superfamily. CMGC Ser/Thr protein kinase family. MAP kinase subfamily. In terms of assembly, interacts with MKK6. In terms of processing, dually phosphorylated on Thr-191 and Tyr-193, which activates the enzyme. In terms of tissue distribution, expressed in roots, stems and flower buds.

The enzyme catalyses L-seryl-[protein] + ATP = O-phospho-L-seryl-[protein] + ADP + H(+). It carries out the reaction L-threonyl-[protein] + ATP = O-phospho-L-threonyl-[protein] + ADP + H(+). Activated by threonine and tyrosine phosphorylation. Activated by the MAP kinase kinase MKK6 in vitro. Its function is as follows. MKK6-MPK13 module positively regulates lateral root formation. This is Mitogen-activated protein kinase 13 (MPK13) from Arabidopsis thaliana (Mouse-ear cress).